We begin with the raw amino-acid sequence, 406 residues long: Dematin (406 aa).

Disordered regions lie at residues 1 to 30 (MERL…PSSI) and 78 to 333 (LPRS…DRGN). A compositionally biased stretch (low complexity) spans 11 to 29 (SPGSVSSSRDSSVPGSPSS). A phosphoserine mark is found at serine 16, serine 18, serine 26, serine 92, serine 96, serine 105, serine 110, serine 113, serine 157, and serine 227. The segment covering 105 to 114 (SPGTISQASA) has biased composition (polar residues). Acidic residues predominate over residues 217–228 (EEEEEEEDDDSG). The interaction with RASGRF2 stretch occupies residues 225–309 (DDSGEEMKAL…SRLQSTDFSP (85 aa)). Basic and acidic residues-rich tracts occupy residues 229 to 243 (EEMK…EELS) and 253 to 262 (ILKEEMEKSL). Phosphoserine is present on residues serine 270, serine 280, serine 290, serine 304, serine 316, serine 334, serine 373, and serine 384. The segment covering 282-323 (HAGTSKSSSLPAYGRTTLSRLQSTDFSPSGSEAESPGLQNGE) has biased composition (polar residues). In terms of domain architecture, HP spans 338 to 406 (VLEQKIYPYE…NELKKKASLF (69 aa)). The residue at position 404 (serine 404) is a Phosphoserine; by PKA.

Belongs to the villin/gelsolin family. As to quaternary structure, monomeric; under reducing conditions. Self-associates. Exists under oxidizing condition as a trimer linked by disulfide bonds. Found in a complex with DMTN, F-actin and spectrin. Found in a complex with ADD2, DMTN and SLC2A1. Interacts with F-actin, ITPKB and spectrin. Interacts with SLC2A1 (via C-terminus cytoplasmic region). Interacts with RASGRF2. Phosphorylated. Phosphorylation at Ser-404 by PKA causes the C-terminal headpiece domain to associate with the N-terminal core domain, and leads to the inhibition of its actin bundling activity.

The protein localises to the cytoplasm. Its subcellular location is the cytosol. It localises to the perinuclear region. It is found in the cytoskeleton. The protein resides in the cell membrane. The protein localises to the membrane. Its subcellular location is the endomembrane system. It localises to the cell projection. In terms of biological role, membrane-cytoskeleton-associated protein with F-actin-binding activity that induces F-actin bundles formation and stabilization. Its F-actin-bundling activity is reversibly regulated upon its phosphorylation by the cAMP-dependent protein kinase A (PKA). Binds to the erythrocyte membrane glucose transporter-1 SLC2A1/GLUT1, and hence stabilizes and attaches the spectrin-actin network to the erythrocytic plasma membrane. Plays a role in maintaining the functional integrity of PKA-activated erythrocyte shape and the membrane mechanical properties. Also plays a role as a modulator of actin dynamics in fibroblasts; acts as a negative regulator of the RhoA activation pathway. In platelets, functions as a regulator of internal calcium mobilization across the dense tubular system that affects platelet granule secretion pathways and aggregation. Also required for the formation of a diverse set of cell protrusions, such as filopodia and lamellipodia, necessary for platelet cell spreading, motility and migration. Acts as a tumor suppressor and inhibits malignant cell transformation. The chain is Dematin (DMTN) from Bos taurus (Bovine).